An 836-amino-acid polypeptide reads, in one-letter code: Zinc fingers and homeoboxes protein 2 (836 aa).

Positions 1 to 61 (MASKRKSTTP…EHSSKETEVV (61 aa)) are disordered. The span at 8-19 (TTPCMVRTSQVL) shows a compositional bias: polar residues. Residues 27–77 (ADRAKDKGAGMPQSDVTKDSWAAEPEHSSKETEVVEVKSMGENLSKKLQGG) form an interaction with EFNB1 region. The segment covering 50-61 (EPEHSSKETEVV) has biased composition (basic and acidic residues). Residue lysine 64 forms a Glycyl lysine isopeptide (Lys-Gly) (interchain with G-Cter in SUMO2) linkage. 2 C2H2-type zinc fingers span residues 78–101 (YECK…DMQH) and 110–133 (YVCA…SKFH). Residues 164–214 (PITASGPGSSDNDPGVSVGKTPMTKTGKLKADAKKVPKKPDEAAPENHMEG) are disordered. Residues 192–214 (LKADAKKVPKKPDEAAPENHMEG) are compositionally biased toward basic and acidic residues. Positions 195-358 (DAKKVPKKPD…PAQLTPTKVS (164 aa)) are required for homodimerization. 4 consecutive DNA-binding regions (homeobox) follow at residues 263–324 (NTTK…WSPE), 439–501 (TPAS…IVHI), 530–591 (PQKF…EQAV), and 628–690 (SPSS…TLSW). The required for repressor activity stretch occupies residues 263–446 (NTTKYNSALD…PLTPASDRKK (184 aa)). The required for interaction with NFYA stretch occupies residues 263–497 (NTTKYNSALD…SDHRYRCQRG (235 aa)). A required for nuclear localization region spans residues 317-446 (HGISWSPEEV…PLTPASDRKK (130 aa)). Residues 404–442 (GQKRPLVTPQAAPEPKRPHIAQVPEPPPKVANTPLTPAS) form a disordered region. Residue lysine 455 forms a Glycyl lysine isopeptide (Lys-Gly) (interchain with G-Cter in SUMO2) linkage. Composition is skewed to basic and acidic residues over residues 699-709 (MSDDRGRDAVS), 730-746 (YAKD…EKLV), and 813-824 (RVAEGTVERADS). A disordered region spans residues 699–836 (MSDDRGRDAV…DSTPAEAGQA (138 aa)). Phosphoserine occurs at positions 824 and 826.

This sequence belongs to the ZHX family. Homodimer (via homeobox domain 1). Heterodimer with ZHX1 (via homeobox domain 1). Heterodimer with ZHX3 (via homeobox domain 1). Heterodimerization with ZHX1 is not necessary for repressor activity. Interacts (via homeobox domain) with NFYA (via N-terminus). Interacts with EFNB1 intracellular domain peptide; the interaction enhances ZHX2 transcriptional repression activity. In terms of tissue distribution, expressed in retina where it localizes to Muller glial cells of the inner nuclear layer (at protein level). Detected in heart, brain, spleen, lung, liver, skeletal muscle, kidney and testis.

The protein localises to the nucleus. In terms of biological role, acts as a transcriptional repressor. Represses the promoter activity of the CDC25C gene stimulated by NFYA. May play a role in retinal development where it regulates the composition of bipolar cell populations, by promoting differentiation of bipolar OFF-type cells. In the brain, may promote maintenance and suppress differentiation of neural progenitor cells in the developing cortex. In Mus musculus (Mouse), this protein is Zinc fingers and homeoboxes protein 2 (Zhx2).